The primary structure comprises 321 residues: UDP-N-acetyl-alpha-D-glucosaminuronate decarboxylase (321 aa).

Residues Gly-12, Phe-13, Ile-14, Asp-33, Asn-34, Tyr-36, Gly-38, Leu-76, Thr-95, Ala-117, Tyr-148, and Lys-152 each contribute to the NAD(+) site. Tyr-148 (proton acceptor) is an active-site residue.

This sequence belongs to the NAD(P)-dependent epimerase/dehydratase family. Homodimer. NAD(+) is required as a cofactor.

The enzyme catalyses UDP-2-acetamido-2-deoxy-alpha-D-glucuronate + H(+) = UDP-N-acetyl-alpha-D-xylosamine + CO2. Activity is completely inhibited by NADH but not by NADPH. Its function is as follows. Decarboxylase involved in the biosynthesis of the nucleotide-sugar UDP-N-acetylxylosamine (UDP-XylNAc). Catalyzes the NAD-dependent decarboxylation of UDP-N-acetylglucosaminuronic acid (UDP-GlcNAcA) to UDP-XylNAc. Cannot use other UDP-uronates, such as UDP-glucuronic acid (UDP-GlcA) and UDP-galacturonic acid (UDP-GalA). In Bacillus cytotoxicus (strain DSM 22905 / CIP 110041 / 391-98 / NVH 391-98), this protein is UDP-N-acetyl-alpha-D-glucosaminuronate decarboxylase.